We begin with the raw amino-acid sequence, 384 residues long: Lipid-A-disaccharide synthase (384 aa).

This sequence belongs to the LpxB family.

It catalyses the reaction a lipid X + a UDP-2-N,3-O-bis[(3R)-3-hydroxyacyl]-alpha-D-glucosamine = a lipid A disaccharide + UDP + H(+). Its pathway is bacterial outer membrane biogenesis; LPS lipid A biosynthesis. Its function is as follows. Condensation of UDP-2,3-diacylglucosamine and 2,3-diacylglucosamine-1-phosphate to form lipid A disaccharide, a precursor of lipid A, a phosphorylated glycolipid that anchors the lipopolysaccharide to the outer membrane of the cell. In Geobacter metallireducens (strain ATCC 53774 / DSM 7210 / GS-15), this protein is Lipid-A-disaccharide synthase.